Here is a 584-residue protein sequence, read N- to C-terminus: Cationic amino acid transporter 7, chloroplastic (584 aa).

Residues 1 to 49 constitute a chloroplast transit peptide; that stretch reads MEAQYRNHDGDTSFSSLRVYLNSLSDTPSRFSRRAVSVSTSYDEMSRVR. The next 14 helical transmembrane spans lie at 62 to 82, 90 to 110, 131 to 151, 185 to 205, 214 to 234, 254 to 274, 293 to 313, 346 to 366, 396 to 416, 417 to 437, 449 to 469, 480 to 500, 508 to 528, and 540 to 560; these read WYDL…FVTT, AGPS…LSAF, ITFG…DYVL, GFNE…FVIC, VNMV…VMGF, FFPF…LSYI, IPMG…LMAI, VVGI…MLGQ, ASAF…LNVL, LNLV…AVIF, WPTL…TLVW, FILG…HCVV, FWGV…NIFL, and FGFF…HASY.

It belongs to the amino acid-polyamine-organocation (APC) superfamily. Cationic amino acid transporter (CAT) (TC 2.A.3.3) family.

The protein localises to the plastid. The protein resides in the chloroplast membrane. In terms of biological role, permease involved in the transport of the cationic amino acids. This Arabidopsis thaliana (Mouse-ear cress) protein is Cationic amino acid transporter 7, chloroplastic (CAT7).